The following is a 465-amino-acid chain: Dihydrolipoyl dehydrogenase (465 aa).

FAD is bound by residues glutamate 34–cysteine 42, lysine 51, and glycine 114. An intrachain disulfide couples cysteine 42 to cysteine 47. NAD(+) contacts are provided by residues glycine 180–isoleucine 184, glutamate 203, valine 237, and serine 264–arginine 267. FAD-binding residues include aspartate 307 and alanine 315. Residue histidine 439 is the Proton acceptor of the active site.

The protein belongs to the class-I pyridine nucleotide-disulfide oxidoreductase family. FAD serves as cofactor.

Its subcellular location is the cytoplasm. It catalyses the reaction N(6)-[(R)-dihydrolipoyl]-L-lysyl-[protein] + NAD(+) = N(6)-[(R)-lipoyl]-L-lysyl-[protein] + NADH + H(+). In terms of biological role, the branched-chain alpha-keto dehydrogenase complex catalyzes the overall conversion of alpha-keto acids to acyl-CoA and CO(2). It contains multiple copies of 3 enzymatic components: branched-chain alpha-keto acid decarboxylase (E1), lipoamide acyltransferase (E2) and lipoamide dehydrogenase (E3). In Chlamydia muridarum (strain MoPn / Nigg), this protein is Dihydrolipoyl dehydrogenase (lpdA).